Here is a 220-residue protein sequence, read N- to C-terminus: Small ribosomal subunit protein eS8 (220 aa).

The protein belongs to the eukaryotic ribosomal protein eS8 family.

This is Small ribosomal subunit protein eS8 (RPS8A) from Leishmania major.